Here is a 70-residue protein sequence, read N- to C-terminus: UPF0519 protein B (70 aa).

It belongs to the UPF0519 family.

The protein is UPF0519 protein B (sigN122) of Dictyostelium discoideum (Social amoeba).